Reading from the N-terminus, the 320-residue chain is MPRLQQKWLNSRECPTLRGEAAKGLFPTKDDPSAHKRMSPSDKDILILCCKLGIALLCLGLLGEVAVRARRALTLDSFNNNSSVQDYNLNDSENSTFLLGQGPQPTSSYKPHRICPLEIEIRMLAKKYIFTNKTNPIGRLLVTMLRNESLSFSTIFTQIQKLEMGIENRKRRSKSIEEQVQGLLASGLEVKKGKKSVFVKIGDRWWQPRTYRGPYIYRPTDAPLPYTGRYDLNWDRWVTINGYKVLYRSLPFRERLARARPPWCMLTEKEKDDMKQQVHDYIYLGTGMHFWGKVFHTKEGAVAGLIEHYSAKTYGMSYYD.

Residues Met1 to Asp44 lie on the Cytoplasmic side of the membrane. A helical membrane pass occupies residues Ile45–Val65. Topologically, residues Ala66 to Asp320 are extracellular. Asn80, Asn81, Asn90, Asn94, Asn132, and Asn147 each carry an N-linked (GlcNAc...) asparagine; by host glycan.

It belongs to the mouse mammary tumor virus PR73 superantigen family.

It localises to the membrane. In terms of biological role, superantigen. This chain is Protein PR73, found in Mus musculus (Mouse).